Reading from the N-terminus, the 511-residue chain is Maturase K (511 aa).

The protein belongs to the intron maturase 2 family. MatK subfamily.

Its subcellular location is the plastid. The protein localises to the chloroplast. Usually encoded in the trnK tRNA gene intron. Probably assists in splicing its own and other chloroplast group II introns. This Triticum aestivum (Wheat) protein is Maturase K.